The primary structure comprises 227 residues: 2-C-methyl-D-erythritol 4-phosphate cytidylyltransferase (227 aa).

The protein belongs to the IspD/TarI cytidylyltransferase family. IspD subfamily.

The catalysed reaction is 2-C-methyl-D-erythritol 4-phosphate + CTP + H(+) = 4-CDP-2-C-methyl-D-erythritol + diphosphate. Its pathway is isoprenoid biosynthesis; isopentenyl diphosphate biosynthesis via DXP pathway; isopentenyl diphosphate from 1-deoxy-D-xylulose 5-phosphate: step 2/6. Functionally, catalyzes the formation of 4-diphosphocytidyl-2-C-methyl-D-erythritol from CTP and 2-C-methyl-D-erythritol 4-phosphate (MEP). The polypeptide is 2-C-methyl-D-erythritol 4-phosphate cytidylyltransferase (Dehalococcoides mccartyi (strain ATCC BAA-2266 / KCTC 15142 / 195) (Dehalococcoides ethenogenes (strain 195))).